A 614-amino-acid polypeptide reads, in one-letter code: V-type proton ATPase catalytic subunit A isoform 1 (614 aa).

247–254 (GAFGCGKT) contacts ATP.

Belongs to the ATPase alpha/beta chains family. In terms of assembly, V-ATPase is a heteromultimeric enzyme made up of two complexes: the ATP-hydrolytic V1 complex and the proton translocation V0 complex. The V1 complex consists of three catalytic AB heterodimers that form a heterohexamer, three peripheral stalks each consisting of EG heterodimers, one central rotor including subunits D and F, and the regulatory subunits C and H. The proton translocation complex V0 consists of the proton transport subunit a, a ring of proteolipid subunits c9c'', rotary subunit d, subunits e and f, and the accessory subunits VhaAC45 and ATP6AP2.

The enzyme catalyses ATP + H2O + 4 H(+)(in) = ADP + phosphate + 5 H(+)(out). ATP hydrolysis occurs at the interface between the nucleotide-binding domains of subunits A and B. ATP hydrolysis triggers a conformational change in the subunits D and F, which induces a shift of subunit d. The c-ring is subsequently rotated and results in a continuous proton translocation across the membrane. Catalytic subunit of the V1 complex of vacuolar(H+)-ATPase (V-ATPase), a multisubunit enzyme composed of a peripheral complex (V1) that hydrolyzes ATP and a membrane integral complex (V0) that translocates protons. V-ATPase is responsible for acidifying and maintaining the pH of intracellular compartments and in some cell types, is targeted to the plasma membrane, where it is responsible for acidifying the extracellular environment. In Drosophila melanogaster (Fruit fly), this protein is V-type proton ATPase catalytic subunit A isoform 1 (Vha68-1).